Reading from the N-terminus, the 817-residue chain is Leucine--tRNA ligase (817 aa).

The 'HIGH' region motif lies at 42–52; that stretch reads PYPSGRLHMGH. The 'KMSKS' region signature appears at 576–580; the sequence is KMSKS. Lys579 serves as a coordination point for ATP.

It belongs to the class-I aminoacyl-tRNA synthetase family.

The protein resides in the cytoplasm. The enzyme catalyses tRNA(Leu) + L-leucine + ATP = L-leucyl-tRNA(Leu) + AMP + diphosphate. This Thioalkalivibrio sulfidiphilus (strain HL-EbGR7) protein is Leucine--tRNA ligase.